A 497-amino-acid polypeptide reads, in one-letter code: COP9 signalosome complex subunit 3 (497 aa).

One can recognise a PCI domain in the interval 233 to 408; it reads QAFDAFERCV…DGSPAYLTFL (176 aa).

It belongs to the CSN3 family. In terms of assembly, component of the COP9 signalosome (CSN) complex.

It localises to the cytoplasm. The protein resides in the nucleus. In terms of biological role, component of the COP9 signalosome (CSN) complex that acts as an regulator of the ubiquitin (Ubl) conjugation pathway by mediating the deneddylation of the cullin subunit of SCF-type E3 ubiquitin-protein ligase complexes. The CSN complex is involved in the regulation of the circadian clock through its control of the stability of the SCF(FWD1) complex. In Neurospora crassa (strain ATCC 24698 / 74-OR23-1A / CBS 708.71 / DSM 1257 / FGSC 987), this protein is COP9 signalosome complex subunit 3 (csn-3).